A 229-amino-acid polypeptide reads, in one-letter code: Casparian strip membrane protein 1 (229 aa).

Residues 1 to 67 (MSTSEAGAAA…FRRADRGSRC (67 aa)) lie on the Cytoplasmic side of the membrane. Residues 68–88 (VALLDFVLRVAAFGPALAAAI) form a helical membrane-spanning segment. Over 89-115 (ATGTSDETLSVFTQFFQFHARFDDFPA) the chain is Extracellular. A helical membrane pass occupies residues 116-136 (LLFFMVANAIAAGYLVLSLPF). The Cytoplasmic segment spans residues 137 to 157 (SAVIVLRPQAIGLRHLLLVCD). Residues 158-178 (MIIAALLTAAAAAAAAIVDLA) form a helical membrane-spanning segment. Residues 179–205 (HSGNLRANWVPICMQFHGFCQRTSGAV) lie on the Extracellular side of the membrane. Residues 206–226 (VGSFLAVLVLLFLVILAAFAI) form a helical membrane-spanning segment. The Cytoplasmic segment spans residues 227–229 (RKR).

It belongs to the Casparian strip membrane proteins (CASP) family. Homodimer and heterodimers.

It localises to the cell membrane. In terms of biological role, regulates membrane-cell wall junctions and localized cell wall deposition. Required for establishment of the Casparian strip membrane domain (CSD) and the subsequent formation of Casparian strips, a cell wall modification of the root endodermis that determines an apoplastic barrier between the intraorganismal apoplasm and the extraorganismal apoplasm and prevents lateral diffusion. The sequence is that of Casparian strip membrane protein 1 from Sorghum bicolor (Sorghum).